The sequence spans 509 residues: Maturase K (509 aa).

The protein belongs to the intron maturase 2 family. MatK subfamily.

The protein resides in the plastid. It localises to the chloroplast. Its function is as follows. Usually encoded in the trnK tRNA gene intron. Probably assists in splicing its own and other chloroplast group II introns. The sequence is that of Maturase K from Vatairea macrocarpa.